The chain runs to 449 residues: Protein king tubby (449 aa).

The tract at residues serine 123–valine 197 is disordered. Over residues alanine 124–aspartate 145 the composition is skewed to polar residues. The residue at position 142 (serine 142) is a Phosphoserine. A compositionally biased stretch (low complexity) spans asparagine 154 to alanine 166. Over residues asparagine 183–glutamate 192 the composition is skewed to gly residues.

This sequence belongs to the TUB family.

The protein localises to the cytoplasm. The protein resides in the nucleus. It is found in the cell projection. It localises to the cilium membrane. Its subcellular location is the rhabdomere. The protein is Protein king tubby of Drosophila ananassae (Fruit fly).